We begin with the raw amino-acid sequence, 71 residues long: Delta-actitoxin-Avd2b 2 (71 aa).

Residues 1–20 form the signal peptide; sequence MNRLLVFLMLGAAFMLVVSA. The propeptide occupies 21–41; sequence NDAYGDEPAFKDLNQGDESLG. Disulfide bonds link C46-C61, C47-C55, and C49-C66.

The protein belongs to the sea anemone short toxin (type III) family.

Its subcellular location is the secreted. The protein localises to the nematocyst. Its function is as follows. Voltage-gated sodium channel (Nav) inhibitor. 1 uM completely inhibits insect voltage-gated sodium channel inactivation (DmNav1 from D.melanogaster). This Anemonia viridis (Snakelocks anemone) protein is Delta-actitoxin-Avd2b 2.